Reading from the N-terminus, the 91-residue chain is Small ribosomal subunit protein uS19 (91 aa).

A disordered region spans residues 72-91 (GEFSPTRKFGGHGDDKKKKK). Positions 82-91 (GHGDDKKKKK) are enriched in basic and acidic residues.

Belongs to the universal ribosomal protein uS19 family.

Protein S19 forms a complex with S13 that binds strongly to the 16S ribosomal RNA. In Spiroplasma kunkelii, this protein is Small ribosomal subunit protein uS19.